The chain runs to 711 residues: Polyribonucleotide nucleotidyltransferase (711 aa).

The Mg(2+) site is built by D486 and D492. The region spanning 553-612 (PRIHTIKINPDKIKDVIGKGGSVIRALTEETGTTIEIEDDGTVKIAATDGEKAKHAIRRI) is the KH domain. The 69-residue stretch at 622–690 (GRVYTGKVTR…RQGRIRLSIK (69 aa)) folds into the S1 motif domain. Positions 689–711 (IKEATEQSQPAAAPEAPAAEQGE) are disordered. The segment covering 694–711 (EQSQPAAAPEAPAAEQGE) has biased composition (low complexity).

Belongs to the polyribonucleotide nucleotidyltransferase family. In terms of assembly, component of the RNA degradosome, which is a multiprotein complex involved in RNA processing and mRNA degradation. Mg(2+) is required as a cofactor.

Its subcellular location is the cytoplasm. The enzyme catalyses RNA(n+1) + phosphate = RNA(n) + a ribonucleoside 5'-diphosphate. Involved in mRNA degradation. Catalyzes the phosphorolysis of single-stranded polyribonucleotides processively in the 3'- to 5'-direction. This chain is Polyribonucleotide nucleotidyltransferase, found in Shigella flexneri serotype 5b (strain 8401).